A 109-amino-acid chain; its full sequence is Nucleoid-associated protein LBUL_1514 (109 aa).

The protein belongs to the YbaB/EbfC family. In terms of assembly, homodimer.

It is found in the cytoplasm. The protein localises to the nucleoid. Functionally, binds to DNA and alters its conformation. May be involved in regulation of gene expression, nucleoid organization and DNA protection. The chain is Nucleoid-associated protein LBUL_1514 from Lactobacillus delbrueckii subsp. bulgaricus (strain ATCC BAA-365 / Lb-18).